Here is a 266-residue protein sequence, read N- to C-terminus: Glutamate racemase 1 (266 aa).

Substrate is bound by residues 11-12 and 43-44; these read DS and YG. The active-site Proton donor/acceptor is Cys74. A substrate-binding site is contributed by 75–76; that stretch reads NT. The active-site Proton donor/acceptor is Cys182. 183–184 is a substrate binding site; the sequence is TH.

It belongs to the aspartate/glutamate racemases family.

It carries out the reaction L-glutamate = D-glutamate. It functions in the pathway cell wall biogenesis; peptidoglycan biosynthesis. Provides the (R)-glutamate required for cell wall biosynthesis. In Caldanaerobacter subterraneus subsp. tengcongensis (strain DSM 15242 / JCM 11007 / NBRC 100824 / MB4) (Thermoanaerobacter tengcongensis), this protein is Glutamate racemase 1.